The following is a 199-amino-acid chain: Peroxiredoxin-1 (199 aa).

An N-acetylserine modification is found at Ser-2. Positions 6-165 (AKIGYPAPNF…IIRLVQAFQF (160 aa)) constitute a Thioredoxin domain. Lys-7 is modified (N6-acetyllysine; alternate). Residue Lys-7 forms a Glycyl lysine isopeptide (Lys-Gly) (interchain with G-Cter in SUMO2); alternate linkage. Residues Lys-16 and Lys-27 each carry the N6-acetyllysine modification. Ser-32 bears the Phosphoserine mark. Lys-35 carries the N6-acetyllysine; alternate modification. Lys-35 carries the post-translational modification N6-succinyllysine; alternate. The active-site Cysteine sulfenic acid (-SOH) intermediate is Cys-52. Phosphothreonine is present on Thr-90. Lys-120 participates in a covalent cross-link: Glycyl lysine isopeptide (Lys-Gly) (interchain with G-Cter in SUMO2). The residue at position 136 (Lys-136) is an N6-acetyllysine. A Glycyl lysine isopeptide (Lys-Gly) (interchain with G-Cter in SUMO1) cross-link involves residue Lys-185. At Lys-197 the chain carries N6-acetyllysine.

It belongs to the peroxiredoxin family. AhpC/Prx1 subfamily. As to quaternary structure, homodimer; disulfide-linked, upon oxidation. 5 homodimers assemble to form a ring-like decamer. Interacts with GDPD5; forms a mixed-disulfide with GDPD5. Interacts with SESN1 and SESN2. Interacts with FAM107A. Phosphorylated on Thr-90 during the M-phase, which leads to a decrease in enzymatic activity. Post-translationally, acetylation increases reducing activity and resistance to superoxidation. Deacetylated by HDAC6 which decreases reducing activity. As to expression, found in various tissues; high concentration in liver.

The protein resides in the cytoplasm. It carries out the reaction a hydroperoxide + [thioredoxin]-dithiol = an alcohol + [thioredoxin]-disulfide + H2O. Thiol-specific peroxidase that catalyzes the reduction of hydrogen peroxide and organic hydroperoxides to water and alcohols, respectively. Plays a role in cell protection against oxidative stress by detoxifying peroxides and as sensor of hydrogen peroxide-mediated signaling events. Might participate in the signaling cascades of growth factors and tumor necrosis factor-alpha by regulating the intracellular concentrations of H(2)O(2). Reduces an intramolecular disulfide bond in GDPD5 that gates the ability to GDPD5 to drive postmitotic motor neuron differentiation. The polypeptide is Peroxiredoxin-1 (Prdx1) (Mus musculus (Mouse)).